We begin with the raw amino-acid sequence, 670 residues long: Probable leucine-rich repeat receptor-like protein kinase At1g68400 (670 aa).

An N-terminal signal peptide occupies residues Met-1–Ser-29. Over Thr-30–Thr-274 the chain is Extracellular. Asn-52, Asn-79, Asn-102, Asn-109, and Asn-112 each carry an N-linked (GlcNAc...) asparagine glycan. LRR repeat units follow at residues Arg-69–Thr-91, Ser-92–Thr-114, Ala-115–Leu-137, Arg-139–Thr-162, His-163–Asp-185, and Leu-186–Phe-207. Asn-149, Asn-182, and Asn-190 each carry an N-linked (GlcNAc...) asparagine glycan. The disordered stretch occupies residues Ser-230–Ser-266. Positions Val-253–Ser-266 are enriched in polar residues. Asn-268 is a glycosylation site (N-linked (GlcNAc...) asparagine). Residues Ile-275–Leu-295 form a helical membrane-spanning segment. Residues Tyr-296–Gln-670 lie on the Cytoplasmic side of the membrane. In terms of domain architecture, Protein kinase spans Arg-362 to Ile-636. Residue Ser-364 is modified to Phosphoserine. ATP contacts are provided by residues Leu-368 to Ala-376 and Lys-390. Ser-443 is modified (phosphoserine). Thr-463 carries the post-translational modification Phosphothreonine. Residue Asp-491 is the Proton acceptor of the active site. Residue Thr-616 is modified to Phosphothreonine.

This sequence belongs to the protein kinase superfamily. Ser/Thr protein kinase family.

Its subcellular location is the cell membrane. It carries out the reaction L-seryl-[protein] + ATP = O-phospho-L-seryl-[protein] + ADP + H(+). The catalysed reaction is L-threonyl-[protein] + ATP = O-phospho-L-threonyl-[protein] + ADP + H(+). This is Probable leucine-rich repeat receptor-like protein kinase At1g68400 from Arabidopsis thaliana (Mouse-ear cress).